The chain runs to 257 residues: Thiazole synthase (257 aa).

The active-site Schiff-base intermediate with DXP is Lys-96. 1-deoxy-D-xylulose 5-phosphate contacts are provided by residues Gly-157, 184–185, and 206–207; these read AG and NT.

Belongs to the ThiG family. Homotetramer. Forms heterodimers with either ThiH or ThiS.

It is found in the cytoplasm. It catalyses the reaction [ThiS sulfur-carrier protein]-C-terminal-Gly-aminoethanethioate + 2-iminoacetate + 1-deoxy-D-xylulose 5-phosphate = [ThiS sulfur-carrier protein]-C-terminal Gly-Gly + 2-[(2R,5Z)-2-carboxy-4-methylthiazol-5(2H)-ylidene]ethyl phosphate + 2 H2O + H(+). Its pathway is cofactor biosynthesis; thiamine diphosphate biosynthesis. In terms of biological role, catalyzes the rearrangement of 1-deoxy-D-xylulose 5-phosphate (DXP) to produce the thiazole phosphate moiety of thiamine. Sulfur is provided by the thiocarboxylate moiety of the carrier protein ThiS. In vitro, sulfur can be provided by H(2)S. The protein is Thiazole synthase of Bartonella quintana (strain Toulouse) (Rochalimaea quintana).